The primary structure comprises 316 residues: Pantothenate kinase (316 aa).

Glycine 95–serine 102 lines the ATP pocket.

The protein belongs to the prokaryotic pantothenate kinase family.

It is found in the cytoplasm. The enzyme catalyses (R)-pantothenate + ATP = (R)-4'-phosphopantothenate + ADP + H(+). It functions in the pathway cofactor biosynthesis; coenzyme A biosynthesis; CoA from (R)-pantothenate: step 1/5. In Klebsiella pneumoniae (strain 342), this protein is Pantothenate kinase.